The chain runs to 92 residues: Large ribosomal subunit protein eL42 (92 aa).

Cys-11, Cys-14, Cys-70, and Cys-73 together coordinate Zn(2+). A C4-type zinc finger spans residues 11 to 73; it reads CPNCRKHTVH…LDLRLKCKEC (63 aa).

The protein belongs to the eukaryotic ribosomal protein eL42 family. As to quaternary structure, part of the 50S ribosomal subunit. Zn(2+) serves as cofactor.

Functionally, binds to the 23S rRNA. The protein is Large ribosomal subunit protein eL42 of Methanothermobacter thermautotrophicus (strain ATCC 29096 / DSM 1053 / JCM 10044 / NBRC 100330 / Delta H) (Methanobacterium thermoautotrophicum).